The following is a 313-amino-acid chain: Epoxide hydrolase 1 (313 aa).

An AB hydrolase-1 domain is found at P25 to A299. D100 acts as the Nucleophile in catalysis. An epoxide is bound at residue Y149. The active-site Proton donor is the Y227. H292 acts as the Proton acceptor in catalysis.

This sequence belongs to the AB hydrolase superfamily. Epoxide hydrolase family. In terms of assembly, homodimer. Highly expressed in fruits 15 days after anthesis (15-DAA).

The enzyme catalyses an epoxide + H2O = an ethanediol. The catalysed reaction is (24S)-24,25-epoxycucurbitadienol + H2O = (24R)-24,25-dihydroxycucurbitadienol. It participates in secondary metabolite biosynthesis; terpenoid biosynthesis. In terms of biological role, epoxide hydrolase involved in the biosynthesis of cucurbitacin and mogroside tetracyclic triterpene natural products (e.g. siamenoside I and mogrosides IV, V and VI). Cucurbitacins have cytotoxic properties and exhibit deterrent taste as a defense barrier against herbivores. Mogrosides are nonsugar highly oxygenated compounds used as high-intensity zero-calorie sweeteners; they also possess pharmacological properties such as regulating immunity, lowering blood sugar and lipid levels, protecting the liver, and acting as antioxidants and antitumor agents. Catalyzes the hydrolysis of aromatic epoxide-containing substrates, such as the conversion of 24,25-epoxycucurbitadienol to 24,25-dihydroxycucurbitadienol. The sequence is that of Epoxide hydrolase 1 from Siraitia grosvenorii (Monk's fruit).